The following is a 1003-amino-acid chain: Phosphoenolpyruvate carboxylase (1003 aa).

The segment at 1 to 24 (MIMTVSDPGGSSMSSSSAITPESE) is disordered. Active-site residues include His-190 and Lys-646.

The protein belongs to the PEPCase type 1 family. It depends on Mg(2+) as a cofactor.

It catalyses the reaction oxaloacetate + phosphate = phosphoenolpyruvate + hydrogencarbonate. Functionally, forms oxaloacetate, a four-carbon dicarboxylic acid source for the tricarboxylic acid cycle. This is Phosphoenolpyruvate carboxylase from Synechococcus sp. (strain WH7803).